We begin with the raw amino-acid sequence, 681 residues long: Protein hook (681 aa).

In terms of domain architecture, Calponin-homology (CH) spans 6–123 (NEMYYSLLEW…RLLQLVLGCA (118 aa)). Coiled coils occupy residues 135–439 (EIMS…LKCG) and 482–584 (QTAL…KYRK).

Belongs to the hook family. Homodimer. Interacts with microtubules via its N-terminus.

It is found in the cytoplasm. The protein resides in the cytoskeleton. The protein localises to the endosome. It localises to the synapse. Functionally, involved in endocytic trafficking by stabilizing organelles of the endocytic pathway. Probably acts as a cytoskeletal linker protein required to tether endosome vesicles to the cytoskeleton. Involved in modulation of endocytosis at stages required for down-regulation of membrane proteins that control synapse size. Not involved in synaptic vesicle recycling. Required in R7 cells for boss endocytosis into multivesicular bodies (MVBs). Has a role in regulating adult longevity. The protein is Protein hook of Drosophila ananassae (Fruit fly).